Here is a 511-residue protein sequence, read N- to C-terminus: Glucans biosynthesis protein G (511 aa).

The first 22 residues, 1–22 (MMKMRWLSAAVMLTLYTSSSWA), serve as a signal peptide directing secretion.

Belongs to the OpgD/OpgG family.

It localises to the periplasm. It functions in the pathway glycan metabolism; osmoregulated periplasmic glucan (OPG) biosynthesis. Involved in the biosynthesis of osmoregulated periplasmic glucans (OPGs). The chain is Glucans biosynthesis protein G from Escherichia fergusonii (strain ATCC 35469 / DSM 13698 / CCUG 18766 / IAM 14443 / JCM 21226 / LMG 7866 / NBRC 102419 / NCTC 12128 / CDC 0568-73).